The primary structure comprises 334 residues: GTPase Obg (334 aa).

The Obg domain maps to 1 to 159 (MRFVDEVVIK…KEVRLELNLL (159 aa)). Residues 160–331 (ADVALLGLPN…LAKKLNEFLQ (172 aa)) form the OBG-type G domain. GTP is bound by residues 166 to 173 (GLPNAGKS), 191 to 195 (FTTMY), 212 to 215 (DIPG), 282 to 285 (NKID), and 312 to 314 (SAA). Residues Ser-173 and Thr-193 each contribute to the Mg(2+) site.

This sequence belongs to the TRAFAC class OBG-HflX-like GTPase superfamily. OBG GTPase family. Monomer. Mg(2+) is required as a cofactor.

It localises to the cytoplasm. Its function is as follows. An essential GTPase which binds GTP, GDP and possibly (p)ppGpp with moderate affinity, with high nucleotide exchange rates and a fairly low GTP hydrolysis rate. Plays a role in control of the cell cycle, stress response, ribosome biogenesis and in those bacteria that undergo differentiation, in morphogenesis control. This chain is GTPase Obg, found in Francisella tularensis subsp. holarctica (strain FTNF002-00 / FTA).